Consider the following 651-residue polypeptide: F-box only protein 43 (651 aa).

Disordered stretches follow at residues 14–42 (MTAGAKKKADHQDTSVSQDSGYSDSLKGF) and 140–171 (LRRIPSHEGSLSNSFADSPRDGSYEPIATSTL). Residues 27–36 (TSVSQDSGYS) are compositionally biased toward polar residues. At serine 33 the chain carries Phosphoserine; by PLK1. Threonine 195 is subject to Phosphothreonine; by CaMK2. An F-box domain is found at 424-499 (SGCFELPEDS…QDKSAHQRRK (76 aa)). The ZBR-type zinc-finger motif lies at 579–627 (ALKPCPRCQYPAKYQALKKRGTCSRKDCGFDFCSLCLCTFHGSKECGTG). Residues cysteine 583, cysteine 586, cysteine 601, cysteine 606, cysteine 611, cysteine 614, histidine 619, and cysteine 624 each contribute to the Zn(2+) site.

In terms of assembly, part of a SCF (SKP1-cullin-F-box) protein ligase complex. Interaction with SKP1 does not occur. In terms of processing, phosphorylated on Thr-195 by CaMK2 in response to calcium during egg activation, which promotes subsequent phosphorylation by PLK1, ubiquitination and protesomal degradation. Ubiquitinated by FBXW1 during egg activation, which promotes proteasomal degradation.

It functions in the pathway protein modification; protein ubiquitination. In terms of biological role, required to prevent anaphase onset in cytostatic factor-arrested oocytes. Inhibits the anaphase-promoting complex/cyclosome (APC/C) ubiquitin ligase and prevents cyclin degradation. Probably recognizes and binds to some phosphorylated proteins and promotes their ubiquitination and degradation. This chain is F-box only protein 43 (fbxo43), found in Xenopus laevis (African clawed frog).